A 35-amino-acid chain; its full sequence is Ranatuerin-2SPa (35 aa).

C28 and C33 form a disulfide bridge.

Expressed by the skin glands.

It localises to the secreted. Antibacterial activity against Gram-positive bacterium S.aureus. Shows no detectable hemolytic activity towards human erythrocytes. The polypeptide is Ranatuerin-2SPa (Lithobates septentrionalis (Mink frog)).